The chain runs to 222 residues: Kinetochore protein Spc25 (222 aa).

Residues 51 to 86 (RHQRKVGKLQKVLMERREELDKRVSFIEELDRELEA) adopt a coiled-coil conformation.

This sequence belongs to the SPC25 family. In terms of assembly, component of the Ndc80 complex, which is composed of Ndc80, Nuf2 and Spc25.

The protein localises to the nucleus. The protein resides in the chromosome. It is found in the centromere. It localises to the kinetochore. Its function is as follows. Acts as a component of the essential kinetochore-associated Ndc80 complex, which is required for chromosome segregation and spindle checkpoint activity during meiosis and mitosis. Required for kinetochore integrity and the organization of stable microtubule binding sites in the outer plate of the kinetochore. Participates in SAC signaling that responds specifically to disruptions in spindle microtubule dynamics. The NDC80 complex synergistically enhances the affinity of the SKA1 complex for microtubules and may allow the NDC80 complex to track depolymerizing microtubules. The chain is Kinetochore protein Spc25 from Drosophila melanogaster (Fruit fly).